We begin with the raw amino-acid sequence, 267 residues long: Glucosamine-6-phosphate deaminase (267 aa).

Asp72 (proton acceptor; for enolization step) is an active-site residue. Catalysis depends on Asp141, which acts as the For ring-opening step. The active-site Proton acceptor; for ring-opening step is the His143. Glu148 serves as the catalytic For ring-opening step.

It belongs to the glucosamine/galactosamine-6-phosphate isomerase family. NagB subfamily. As to quaternary structure, homohexamer.

The catalysed reaction is alpha-D-glucosamine 6-phosphate + H2O = beta-D-fructose 6-phosphate + NH4(+). Its pathway is amino-sugar metabolism; N-acetylneuraminate degradation; D-fructose 6-phosphate from N-acetylneuraminate: step 5/5. Allosterically activated by N-acetylglucosamine 6-phosphate (GlcNAc6P). Functionally, catalyzes the reversible isomerization-deamination of glucosamine 6-phosphate (GlcN6P) to form fructose 6-phosphate (Fru6P) and ammonium ion. The protein is Glucosamine-6-phosphate deaminase of Actinobacillus pleuropneumoniae serotype 5b (strain L20).